Here is a 473-residue protein sequence, read N- to C-terminus: Poly(A) polymerase catalytic subunit (473 aa).

Catalysis depends on residues Asp193 and Asp195.

It belongs to the poxviridae poly(A) polymerase catalytic subunit family. Heterodimer of a large (catalytic) subunit and a small (regulatory) subunit.

It carries out the reaction RNA(n) + ATP = RNA(n)-3'-adenine ribonucleotide + diphosphate. Functionally, polymerase that creates the 3'-poly(A) tail of mRNA's. This is Poly(A) polymerase catalytic subunit (PAPL) from Crocodylus johnstoni (Australian freshwater crocodile).